The following is a 287-amino-acid chain: tRNA pseudouridine synthase B (287 aa).

Catalysis depends on aspartate 38, which acts as the Nucleophile.

It belongs to the pseudouridine synthase TruB family. Type 1 subfamily.

The catalysed reaction is uridine(55) in tRNA = pseudouridine(55) in tRNA. Its function is as follows. Responsible for synthesis of pseudouridine from uracil-55 in the psi GC loop of transfer RNAs. The protein is tRNA pseudouridine synthase B of Aquifex aeolicus (strain VF5).